We begin with the raw amino-acid sequence, 476 residues long: Cysteine--tRNA ligase (476 aa).

Position 29 (cysteine 29) interacts with Zn(2+). The 'HIGH' region signature appears at 31-41 (PTVYDYTHIGH). Zn(2+) is bound by residues cysteine 209, histidine 234, and glutamate 238. Positions 266–270 (KMSKS) match the 'KMSKS' region motif. Residue lysine 269 participates in ATP binding.

Belongs to the class-I aminoacyl-tRNA synthetase family. It depends on Zn(2+) as a cofactor.

The protein localises to the cytoplasm. The enzyme catalyses tRNA(Cys) + L-cysteine + ATP = L-cysteinyl-tRNA(Cys) + AMP + diphosphate. This is Cysteine--tRNA ligase from Thermococcus kodakarensis (strain ATCC BAA-918 / JCM 12380 / KOD1) (Pyrococcus kodakaraensis (strain KOD1)).